Consider the following 92-residue polypeptide: PPQIQVYTRHPPENGKPNILNCYVSQFHPPHIEIEILKNGKKIPEIEMSDLSFSKDWSFYILAHTEITPTESDTFACRVKHVSLNEPKTVIW.

One can recognise an Ig-like C1-type domain in the interval 2–91 (PQIQVYTRHP…VSLNEPKTVI (90 aa)). A disulfide bridge connects residues cysteine 22 and cysteine 77.

It belongs to the beta-2-microglobulin family. As to quaternary structure, heterodimer of an alpha chain and a beta chain. Beta-2-microglobulin is the beta-chain of major histocompatibility complex class I molecules.

The protein resides in the secreted. Its function is as follows. Component of the class I major histocompatibility complex (MHC). Involved in the presentation of peptide antigens to the immune system. This Mus cervicolor (Fawn-colored mouse) protein is Beta-2-microglobulin (B2m).